Consider the following 124-residue polypeptide: Small ribosomal subunit protein uS12 (124 aa).

Asp89 is subject to 3-methylthioaspartic acid. Residues 105–124 (SGVSDRRQGRSKYGAKRPKS) form a disordered region. Residues 113–124 (GRSKYGAKRPKS) show a composition bias toward basic residues.

Belongs to the universal ribosomal protein uS12 family. Part of the 30S ribosomal subunit. Contacts proteins S8 and S17. May interact with IF1 in the 30S initiation complex.

With S4 and S5 plays an important role in translational accuracy. Its function is as follows. Interacts with and stabilizes bases of the 16S rRNA that are involved in tRNA selection in the A site and with the mRNA backbone. Located at the interface of the 30S and 50S subunits, it traverses the body of the 30S subunit contacting proteins on the other side and probably holding the rRNA structure together. The combined cluster of proteins S8, S12 and S17 appears to hold together the shoulder and platform of the 30S subunit. The polypeptide is Small ribosomal subunit protein uS12 (Colwellia psychrerythraea (strain 34H / ATCC BAA-681) (Vibrio psychroerythus)).